The following is a 486-amino-acid chain: Protein nucleotidyltransferase YdiU (486 aa).

Glycine 90, glycine 92, arginine 93, lysine 113, aspartate 125, glycine 126, arginine 176, and arginine 183 together coordinate ATP. Catalysis depends on aspartate 252, which acts as the Proton acceptor. 2 residues coordinate Mg(2+): asparagine 253 and aspartate 262. Aspartate 262 is an ATP binding site.

This sequence belongs to the SELO family. Mg(2+) is required as a cofactor. It depends on Mn(2+) as a cofactor.

It carries out the reaction L-seryl-[protein] + ATP = 3-O-(5'-adenylyl)-L-seryl-[protein] + diphosphate. It catalyses the reaction L-threonyl-[protein] + ATP = 3-O-(5'-adenylyl)-L-threonyl-[protein] + diphosphate. The catalysed reaction is L-tyrosyl-[protein] + ATP = O-(5'-adenylyl)-L-tyrosyl-[protein] + diphosphate. The enzyme catalyses L-histidyl-[protein] + UTP = N(tele)-(5'-uridylyl)-L-histidyl-[protein] + diphosphate. It carries out the reaction L-seryl-[protein] + UTP = O-(5'-uridylyl)-L-seryl-[protein] + diphosphate. It catalyses the reaction L-tyrosyl-[protein] + UTP = O-(5'-uridylyl)-L-tyrosyl-[protein] + diphosphate. Nucleotidyltransferase involved in the post-translational modification of proteins. It can catalyze the addition of adenosine monophosphate (AMP) or uridine monophosphate (UMP) to a protein, resulting in modifications known as AMPylation and UMPylation. This chain is Protein nucleotidyltransferase YdiU, found in Pseudomonas aeruginosa (strain LESB58).